A 370-amino-acid polypeptide reads, in one-letter code: Dual-specificity RNA methyltransferase RlmN (370 aa).

E93 serves as the catalytic Proton acceptor. In terms of domain architecture, Radical SAM core spans 99-337 (EEGRGTLCVS…VTTVRKTRGD (239 aa)). A disulfide bridge links C106 with C343. C113, C117, and C120 together coordinate [4Fe-4S] cluster. S-adenosyl-L-methionine contacts are provided by residues 167–168 (GE), S199, 221–223 (SLH), and N300. Residue C343 is the S-methylcysteine intermediate of the active site.

It belongs to the radical SAM superfamily. RlmN family. It depends on [4Fe-4S] cluster as a cofactor.

The protein resides in the cytoplasm. It carries out the reaction adenosine(2503) in 23S rRNA + 2 reduced [2Fe-2S]-[ferredoxin] + 2 S-adenosyl-L-methionine = 2-methyladenosine(2503) in 23S rRNA + 5'-deoxyadenosine + L-methionine + 2 oxidized [2Fe-2S]-[ferredoxin] + S-adenosyl-L-homocysteine. It catalyses the reaction adenosine(37) in tRNA + 2 reduced [2Fe-2S]-[ferredoxin] + 2 S-adenosyl-L-methionine = 2-methyladenosine(37) in tRNA + 5'-deoxyadenosine + L-methionine + 2 oxidized [2Fe-2S]-[ferredoxin] + S-adenosyl-L-homocysteine. Specifically methylates position 2 of adenine 2503 in 23S rRNA and position 2 of adenine 37 in tRNAs. m2A2503 modification seems to play a crucial role in the proofreading step occurring at the peptidyl transferase center and thus would serve to optimize ribosomal fidelity. This is Dual-specificity RNA methyltransferase RlmN from Francisella tularensis subsp. holarctica (strain LVS).